We begin with the raw amino-acid sequence, 239 residues long: MINDVISPEFDENGRALRRIRSFVRRQGRLTKGQQLALDSYWPVMGVEYQAAPVDLNTLFGREAPIVLEIGFGMGTSLVTMAANNPQQNFLGIEVHSPGVGACLSSAHDAGLSNLRIMCHDAVEVLENMIPEASLDMVQLFFPDPWHKARHNKRRIVQTPFVELVKSKLKVGGVFHMATDWQPYAEHMLEVMSGVSGYLNLSEQNDYVPRPDSRPLTKFELRGQRLGHGVWDLMFERKE.

S-adenosyl-L-methionine-binding residues include E69, E94, D121, and D144. The active site involves D144. K148 serves as a coordination point for substrate. The segment at 150-155 (RHNKRR) is interaction with RNA. Substrate is bound by residues D180 and 217–220 (TKFE).

Belongs to the class I-like SAM-binding methyltransferase superfamily. TrmB family. As to quaternary structure, monomer.

The catalysed reaction is guanosine(46) in tRNA + S-adenosyl-L-methionine = N(7)-methylguanosine(46) in tRNA + S-adenosyl-L-homocysteine. The protein operates within tRNA modification; N(7)-methylguanine-tRNA biosynthesis. In terms of biological role, catalyzes the formation of N(7)-methylguanine at position 46 (m7G46) in tRNA. The chain is tRNA (guanine-N(7)-)-methyltransferase from Yersinia pseudotuberculosis serotype O:1b (strain IP 31758).